Here is a 444-residue protein sequence, read N- to C-terminus: Alpha-(1,3)-fucosyltransferase B (444 aa).

Topologically, residues 1-6 are cytoplasmic; that stretch reads MRLAQR. Residues 7–27 traverse the membrane as a helical; Signal-anchor for type II membrane protein segment; that stretch reads YGIALVALLMVGATVLFFWSE. Over 28 to 444 the chain is Lumenal; that stretch reads NIINYENIKF…GNNCSNSSNT (417 aa). N-linked (GlcNAc...) asparagine glycosylation is found at asparagine 279, asparagine 437, and asparagine 440.

The protein belongs to the glycosyltransferase 10 family.

The protein resides in the golgi apparatus. It localises to the golgi stack membrane. Its pathway is protein modification; protein glycosylation. This Drosophila melanogaster (Fruit fly) protein is Alpha-(1,3)-fucosyltransferase B (FucTB).